The chain runs to 126 residues: Small ribosomal subunit protein uS13 (126 aa).

Residues 95–126 (GLPVRGQRTRTNARTRKGPRKTVAGKKKAPRK) form a disordered region.

Belongs to the universal ribosomal protein uS13 family. As to quaternary structure, part of the 30S ribosomal subunit. Forms a loose heterodimer with protein S19. Forms two bridges to the 50S subunit in the 70S ribosome.

In terms of biological role, located at the top of the head of the 30S subunit, it contacts several helices of the 16S rRNA. In the 70S ribosome it contacts the 23S rRNA (bridge B1a) and protein L5 of the 50S subunit (bridge B1b), connecting the 2 subunits; these bridges are implicated in subunit movement. Contacts the tRNAs in the A and P-sites. The chain is Small ribosomal subunit protein uS13 (rpsM) from Thermus thermophilus (strain ATCC BAA-163 / DSM 7039 / HB27).